We begin with the raw amino-acid sequence, 339 residues long: Oncoprotein MEQ (339 aa).

The disordered stretch occupies residues 1–80; it reads MSQEPEPGAM…ARRRRRKQTD (80 aa). At Ser-42 the chain carries Phosphoserine; by host CDK2. The tract at residues 57-84 is basic motif; the sequence is KQKLERRRKRNRDAARRRRRKQTDYVDK. A bZIP domain is found at 57–120; sequence KQKLERRRKR…TSLRVQLACH (64 aa). The span at 60–77 shows a compositional bias: basic residues; sequence LERRRKRNRDAARRRRRK. The Nuclear localization signal motif lies at 62 to 78; it reads RRRKRNRDAARRRRRKQ. Positions 85–113 are leucine-zipper; sequence LHEACEELQRANEHLRKEIRDLRTECTSL. Positions 120 to 339 are transactivation domain; it reads HEPVCPMAVP…VWWFPGDGRP (220 aa). Over residues 145-160 the composition is skewed to pro residues; sequence PEPPICTPPPPSPDEP. A disordered region spans residues 145 to 172; that stretch reads PEPPICTPPPPSPDEPNAPHCSGSQPPI.

Belongs to the bZIP family. Jun subfamily. As to quaternary structure, homodimer. Interacts with host JUN; this interaction allows MEQ to engage in host cell processes by disguising itself as a cellular JUN. In terms of processing, phosphorylated by host CDK2; this phosphorylation greatly reduces the DNA binding activity of MEQ.

The protein resides in the host nucleus. It is found in the host nucleolus. Functions as a DNA-binding transcription factor. Promotes transformation, host cell growth, host cell-cycle progression through G1/S phase, and possesses antiapoptotic activity. Forms functional heterodimers with host JUN. These heterodimers bind with high affinity DNA sequences called MEQ-responsive elements MERE I (TGACA/GTCA), while MEQ homodimers bind a second type of sites termed MERE II (ACACA). Both homo and heterodimerization of MEQ are required for oncogenesis. This chain is Oncoprotein MEQ (MDV005), found in Gallid herpesvirus 2 (strain Chicken/Md5/ATCC VR-987) (GaHV-2).